The sequence spans 776 residues: MKQNFDDRKIVKQYREIARQIVKKEGLYKNMDQDELREQTNYWREKFKTKEMSERDKINIFALAREAASRIIGLDAVVVQLIGALVLGDGKVAEMKTGEGKTLMSLFVMFIEVMRGNRVHLVTANEYLARRDREEIGQVLEYLGISVALNESDLDKDQKKAIYTADVIYGTASEFGFDYLRDNMVRQKEDKVQSGLDFVLIDEADSILIDEARTPLLISDRKEEDLSLYQTANKLVKTMLKDEYEIEEHKRFVWLNDAGIEKAQKFWGVESLYSAEGQAELRITMLLMRAHFLMHKDKDYVVLDDEVLIIDPHTGRALPGRRFNDGLHQAIEAKEEVEVKEESRTLATITIQNYFRMYKKISGMTGTAKTEEEEFRQIYNMDVVVIPTNLRINREDVPDDIFYTKKEKGRAIVYEVSWRYEKGQPTLIGTSSIKSNEWISGLLDAAGIPHQVLNAKNHAQEAEIIAKAGKRGMVTLATNMAGRGTDIKLDPDVHKLGGLAVIGTERHESRRIDLQLMGRSGRRGDPGFSKFMISLEDDLLEQFESKSWEKLSVKLKRKAPRDGKPVNSSKIHAVVVNAQKRLEGANYDIRKDLLSYDEVIDLQRKMVYKERDLLLERNKLGVSSEKILREVAEYAFIHPVDIEQEKLEKYYARQKELLGGTKFPVSFDEVSLMEPAEVVEKIVTWHKKERDKFPIETITAIEKEVYLNLMDQMWVMHLDAMVQLREGIHLRAYGQQDPLVMYQKEGAQLFEKFQADYHFYFAHALLELDPDGLVQG.

ATP contacts are provided by residues Gln-80, 98–102, and Asp-486; that span reads GEGKT.

The protein belongs to the SecA family. In terms of assembly, monomer and homodimer. Part of the essential Sec protein translocation apparatus which comprises SecA, SecYEG and auxiliary proteins SecDF. Other proteins may also be involved.

Its subcellular location is the cell membrane. The protein resides in the cytoplasm. It carries out the reaction ATP + H2O + cellular proteinSide 1 = ADP + phosphate + cellular proteinSide 2.. Part of the Sec protein translocase complex. Interacts with the SecYEG preprotein conducting channel. Has a central role in coupling the hydrolysis of ATP to the transfer of proteins into and across the cell membrane, serving as an ATP-driven molecular motor driving the stepwise translocation of polypeptide chains across the membrane. In Listeria welshimeri serovar 6b (strain ATCC 35897 / DSM 20650 / CCUG 15529 / CIP 8149 / NCTC 11857 / SLCC 5334 / V8), this protein is Protein translocase subunit SecA 2.